An 85-amino-acid polypeptide reads, in one-letter code: Glutaredoxin 1 (85 aa).

In terms of domain architecture, Glutaredoxin spans 1-85; sequence MQTVIFGRSG…AAWVKENLDA (85 aa). A disulfide bond links cysteine 11 and cysteine 14.

The protein belongs to the glutaredoxin family. As to quaternary structure, monomer.

The disulfide bond functions as an electron carrier in the glutathione-dependent synthesis of deoxyribonucleotides by the enzyme ribonucleotide reductase. In addition, it is also involved in reducing some disulfides in a coupled system with glutathione reductase. This is Glutaredoxin 1 (grxA) from Shigella flexneri.